Consider the following 255-residue polypeptide: MFIGIVSLFPEMFRAITDYGVTGRAVKNGLLNIQSWSPRDFTHDRHRTVDDRPYGGGPGMLMMVQPLRDAIHAAKAAAGEGAKVIYLSPQGRKLDQAGVSELATNQKLILVCGRYEGVDERVIQTEIDEEWSIGDYVLSGGELPAMTLIDSVARFIPGVLGHEASAIEDSFADGLLDCPHYTRPEVLEGMEVPPVLLSGNHAEIRRWRLKQSLGRTWLRRPELLENLALTEEQARLLAEFKTEHAQQQHKHDGMA.

Residues Gly113 and 133–138 (IGDYVL) contribute to the S-adenosyl-L-methionine site.

This sequence belongs to the RNA methyltransferase TrmD family. In terms of assembly, homodimer.

The protein localises to the cytoplasm. It carries out the reaction guanosine(37) in tRNA + S-adenosyl-L-methionine = N(1)-methylguanosine(37) in tRNA + S-adenosyl-L-homocysteine + H(+). In terms of biological role, specifically methylates guanosine-37 in various tRNAs. In Salmonella choleraesuis (strain SC-B67), this protein is tRNA (guanine-N(1)-)-methyltransferase.